A 380-amino-acid chain; its full sequence is Autophagy protein 5 (380 aa).

A Glycyl lysine isopeptide (Lys-Gly) (interchain with G-Cter in ATG12) cross-link involves residue Lys-138. Residues 194-203 (TSSVEGQQGS) are compositionally biased toward polar residues. 2 disordered regions span residues 194 to 214 (TSSV…SGKP) and 283 to 309 (RIPD…TPRS).

This sequence belongs to the ATG5 family. In terms of assembly, conjugated to ATG12. Conjugated to ATG12; which is essential for autophagy.

It localises to the cytoplasm. In terms of biological role, required for autophagy. Conjugation to ATG12 is essential for plant nutrient recycling. This chain is Autophagy protein 5 (ATG5), found in Oryza sativa subsp. japonica (Rice).